A 378-amino-acid chain; its full sequence is Probable pectin lyase A (378 aa).

Positions Met1–Ala18 are cleaved as a signal peptide. Cystine bridges form between Cys81/Cys100 and Cys90/Cys224. Asn127 carries an N-linked (GlcNAc...) asparagine glycan. Arg254 is a catalytic residue. A disulfide bridge connects residues Cys321 and Cys329.

It belongs to the polysaccharide lyase 1 family.

The protein localises to the secreted. It carries out the reaction Eliminative cleavage of (1-&gt;4)-alpha-D-galacturonan methyl ester to give oligosaccharides with 4-deoxy-6-O-methyl-alpha-D-galact-4-enuronosyl groups at their non-reducing ends.. Pectinolytic enzymes consist of four classes of enzymes: pectin lyase, polygalacturonase, pectin methylesterase and rhamnogalacturonase. Among pectinolytic enzymes, pectin lyase is the most important in depolymerization of pectin, since it cleaves internal glycosidic bonds of highly methylated pectins. This Neosartorya fischeri (strain ATCC 1020 / DSM 3700 / CBS 544.65 / FGSC A1164 / JCM 1740 / NRRL 181 / WB 181) (Aspergillus fischerianus) protein is Probable pectin lyase A (pelA).